The sequence spans 452 residues: Exodeoxyribonuclease 7 large subunit (452 aa).

This sequence belongs to the XseA family. Heterooligomer composed of large and small subunits.

It is found in the cytoplasm. It carries out the reaction Exonucleolytic cleavage in either 5'- to 3'- or 3'- to 5'-direction to yield nucleoside 5'-phosphates.. Bidirectionally degrades single-stranded DNA into large acid-insoluble oligonucleotides, which are then degraded further into small acid-soluble oligonucleotides. The polypeptide is Exodeoxyribonuclease 7 large subunit (Bacillus cereus (strain ATCC 10987 / NRS 248)).